A 284-amino-acid polypeptide reads, in one-letter code: Nucleotide-binding protein NMC0691 (284 aa).

ATP is bound at residue 8–15 (GLSGSGKS). 58-61 (DVRS) is a binding site for GTP.

Belongs to the RapZ-like family.

Displays ATPase and GTPase activities. The protein is Nucleotide-binding protein NMC0691 of Neisseria meningitidis serogroup C / serotype 2a (strain ATCC 700532 / DSM 15464 / FAM18).